Here is a 926-residue protein sequence, read N- to C-terminus: Serine/threonine-protein kinase pakE (926 aa).

The segment covering 36 to 55 has biased composition (polar residues); that stretch reads SSRELPTQDSSTKTSNITTP. Disordered regions lie at residues 36 to 257 and 546 to 576; these read SSRE…RPKL and QLNN…TTTT. Residues 56–107 are compositionally biased toward low complexity; the sequence is NNNNNNNNNNNNNNNNNNNNNNNNNNNNNNNNNNNNNNNNNNNNNNNNNNNN. Polar residues predominate over residues 108–117; sequence TPTSLNSSWK. Residues 134 to 173 are compositionally biased toward low complexity; it reads NNNNNVGSPNNQSTSQTNHQQPPPQQLQQQQSLSSTSTPS. The span at 183–204 shows a compositional bias: polar residues; sequence RRNVTSPNLTRSDPTVPITNSR. The span at 215-253 shows a compositional bias: low complexity; that stretch reads PQFQLNNLNFDDNNDHSTTTTNNNNNNNNNNSNNNNNNN. The stretch at 534–567 forms a coiled coil; it reads LDFEKELKENQQQLNNNNNNNNNNNNNNNNNNNN. Residues 650–903 form the Protein kinase domain; it reads FEFKEKLGQG…VIDLLSHDFI (254 aa). ATP-binding positions include 656–664 and lysine 679; that span reads LGQGGYGAV. The active-site Proton acceptor is the aspartate 771.

This sequence belongs to the protein kinase superfamily. STE Ser/Thr protein kinase family. STE20 subfamily. Mg(2+) serves as cofactor.

It carries out the reaction L-seryl-[protein] + ATP = O-phospho-L-seryl-[protein] + ADP + H(+). It catalyses the reaction L-threonyl-[protein] + ATP = O-phospho-L-threonyl-[protein] + ADP + H(+). In terms of biological role, may play a role in responding to changes in chemoattractant levels. The protein is Serine/threonine-protein kinase pakE of Dictyostelium discoideum (Social amoeba).